Reading from the N-terminus, the 963-residue chain is Aminopeptidase N (963 aa).

At 2–8 (AKGFYIS) the chain is on the cytoplasmic side. A helical; Signal-anchor for type II membrane protein transmembrane segment spans residues 9–32 (KALGILGILLGVAAVATIIALSVV). The cytosolic Ser/Thr-rich junction stretch occupies residues 33 to 64 (YAQEKNKNAEHVPQAPTSPTITTTAAITLDQS). Residues 33-963 (YAQEKNKNAE…VVLNWFIEHS (931 aa)) are Extracellular-facing. The metalloprotease stretch occupies residues 65–963 (KPWNRYRLPT…VVLNWFIEHS (899 aa)). N-linked (GlcNAc...) asparagine glycans are attached at residues Asn-82 and Asn-124. Tyr-171 is subject to Sulfotyrosine. N-linked (GlcNAc...) asparagine glycans are attached at residues Asn-229, Asn-237, Asn-258, Asn-286, Asn-314, and Asn-328. Residue 347–351 (GAMEN) coordinates substrate. Residue His-383 coordinates Zn(2+). The active-site Proton acceptor is the Glu-384. Zn(2+) is bound by residues His-387 and Glu-406. Residues Asn-506, Asn-556, Asn-569, Asn-622, Asn-646, and Asn-736 are each glycosylated (N-linked (GlcNAc...) asparagine). Positions 717–813 (KYLRKQVEPL…DQWDFAWGQL (97 aa)) are interaction with TGEV spike glycoprotein. Cystine bridges form between Cys-758–Cys-765 and Cys-795–Cys-831.

Belongs to the peptidase M1 family. In terms of assembly, homodimer. Interacts with SLC6A19. (Microbial infection) Interacts with TGEV and PRCoV spike glycoprotein. It depends on Zn(2+) as a cofactor. Post-translationally, sulfated. N- and O-glycosylated. In terms of processing, may undergo proteolysis and give rise to a soluble form.

It is found in the cell membrane. The catalysed reaction is Release of an N-terminal amino acid, Xaa-|-Yaa- from a peptide, amide or arylamide. Xaa is preferably Ala, but may be most amino acids including Pro (slow action). When a terminal hydrophobic residue is followed by a prolyl residue, the two may be released as an intact Xaa-Pro dipeptide.. Broad specificity aminopeptidase which plays a role in the final digestion of peptides generated from hydrolysis of proteins by gastric and pancreatic proteases. Also involved in the processing of various peptides including peptide hormones, such as angiotensin III and IV, neuropeptides, and chemokines. May also be involved the cleavage of peptides bound to major histocompatibility complex class II molecules of antigen presenting cells. May have a role in angiogenesis and promote cholesterol crystallization. It is able to degrade Leu-enkephalin and Met-enkephalin but not cholecystokinin CCK8, neuromedin C (GRP-10), somatostatin-14, substance P and vasoactive intestinal peptide. May have a role in amino acid transport by acting as binding partner of amino acid transporter SLC6A19 and regulating its activity. Functionally, (Microbial infection) In case of porcine transmissible gastroenteritis coronavirus (TGEV) and porcine respiratory coronavirus (PRCoV) infections, serves as a receptor for TGEV and PRCoV spike glycoprotein in a species-specific manner. The sequence is that of Aminopeptidase N (ANPEP) from Sus scrofa (Pig).